Here is a 49-residue protein sequence, read N- to C-terminus: Large ribosomal subunit protein bL33B (49 aa).

The protein belongs to the bacterial ribosomal protein bL33 family.

In Listeria welshimeri serovar 6b (strain ATCC 35897 / DSM 20650 / CCUG 15529 / CIP 8149 / NCTC 11857 / SLCC 5334 / V8), this protein is Large ribosomal subunit protein bL33B.